A 210-amino-acid chain; its full sequence is Orotate phosphoribosyltransferase (210 aa).

Residues Arg97, Lys98, and 125–133 each bind 5-phospho-alpha-D-ribose 1-diphosphate; that span reads NDMVSSGKS. Orotate is bound by residues Ser129 and Arg157.

Belongs to the purine/pyrimidine phosphoribosyltransferase family. PyrE subfamily. As to quaternary structure, homodimer. The cofactor is Mg(2+).

The catalysed reaction is orotidine 5'-phosphate + diphosphate = orotate + 5-phospho-alpha-D-ribose 1-diphosphate. It functions in the pathway pyrimidine metabolism; UMP biosynthesis via de novo pathway; UMP from orotate: step 1/2. Catalyzes the transfer of a ribosyl phosphate group from 5-phosphoribose 1-diphosphate to orotate, leading to the formation of orotidine monophosphate (OMP). The protein is Orotate phosphoribosyltransferase of Chlamydia pneumoniae (Chlamydophila pneumoniae).